A 520-amino-acid polypeptide reads, in one-letter code: Putative cytochrome P450 CYP13A4 (520 aa).

Residue cysteine 464 participates in heme binding.

It belongs to the cytochrome P450 family. Requires heme as cofactor.

Its function is as follows. Cytochromes P450 are a group of heme-thiolate monooxygenases. They oxidize a variety of structurally unrelated compounds, including steroids, fatty acids, and xenobiotics. This Caenorhabditis elegans protein is Putative cytochrome P450 CYP13A4 (cyp-13A4).